Here is a 79-residue protein sequence, read N- to C-terminus: Phosphoribosylformylglycinamidine synthase subunit PurS (79 aa).

Belongs to the PurS family. In terms of assembly, homodimer. Part of the FGAM synthase complex composed of 1 PurL, 1 PurQ and 2 PurS subunits.

It is found in the cytoplasm. It catalyses the reaction N(2)-formyl-N(1)-(5-phospho-beta-D-ribosyl)glycinamide + L-glutamine + ATP + H2O = 2-formamido-N(1)-(5-O-phospho-beta-D-ribosyl)acetamidine + L-glutamate + ADP + phosphate + H(+). It functions in the pathway purine metabolism; IMP biosynthesis via de novo pathway; 5-amino-1-(5-phospho-D-ribosyl)imidazole from N(2)-formyl-N(1)-(5-phospho-D-ribosyl)glycinamide: step 1/2. Part of the phosphoribosylformylglycinamidine synthase complex involved in the purines biosynthetic pathway. Catalyzes the ATP-dependent conversion of formylglycinamide ribonucleotide (FGAR) and glutamine to yield formylglycinamidine ribonucleotide (FGAM) and glutamate. The FGAM synthase complex is composed of three subunits. PurQ produces an ammonia molecule by converting glutamine to glutamate. PurL transfers the ammonia molecule to FGAR to form FGAM in an ATP-dependent manner. PurS interacts with PurQ and PurL and is thought to assist in the transfer of the ammonia molecule from PurQ to PurL. The protein is Phosphoribosylformylglycinamidine synthase subunit PurS of Mycobacterium leprae (strain TN).